The primary structure comprises 86 residues: Sec-independent protein translocase protein TatA (86 aa).

Residues 1–21 traverse the membrane as a helical segment; it reads MGISIWQLLIILAIVLVLFGA.

This sequence belongs to the TatA/E family. As to quaternary structure, the Tat system comprises two distinct complexes: a TatABC complex, containing multiple copies of TatA, TatB and TatC subunits, and a separate TatA complex, containing only TatA subunits. Substrates initially bind to the TatABC complex, which probably triggers association of the separate TatA complex to form the active translocon.

Its subcellular location is the cell inner membrane. Functionally, part of the twin-arginine translocation (Tat) system that transports large folded proteins containing a characteristic twin-arginine motif in their signal peptide across membranes. TatA could form the protein-conducting channel of the Tat system. This chain is Sec-independent protein translocase protein TatA, found in Hydrogenovibrio crunogenus (strain DSM 25203 / XCL-2) (Thiomicrospira crunogena).